The sequence spans 211 residues: Uridine kinase (211 aa).

Residue 13–20 (GGTASGKT) participates in ATP binding.

This sequence belongs to the uridine kinase family.

The protein resides in the cytoplasm. It catalyses the reaction uridine + ATP = UMP + ADP + H(+). The enzyme catalyses cytidine + ATP = CMP + ADP + H(+). It participates in pyrimidine metabolism; CTP biosynthesis via salvage pathway; CTP from cytidine: step 1/3. Its pathway is pyrimidine metabolism; UMP biosynthesis via salvage pathway; UMP from uridine: step 1/1. This Thermus thermophilus (strain ATCC BAA-163 / DSM 7039 / HB27) protein is Uridine kinase.